A 508-amino-acid polypeptide reads, in one-letter code: MALPWYRVHTVVLNDPGRLIAVHLMHTALVSGWAGSMALYELAVFDPSDPILDPMWRQGMFVIPFMTRLGVTKSWGGWSITGETITNAGLWSYEGVAATHIILSGLLFLAAIWHWVYWDLELFRDERTGKPSLDLPKIFGIHLFLSGVLCFGFGAFHVTGLFGPGIWVSDPYGLTGNVQPVIPAWGAEGFDPFNPGGIASHHIAAGILGIIAGLFHLSVRPPQRLYKGLRMGNIETVLSSSIAAVFWAAFVVAGTMWYGSAATPVELFGPTRYQWDQGYFQQEIERRIRTSLDEGLSLSEAWSKIPEKLAFYDYIGNNPAKGGLFRAGAMDNGDGIAVGWLGHAVFKDKEGNELFVRRMPTFFETFPVVLLDKDGVVRADVPFRRAESKYSIEQVGVSVEFYGGELNGVSFSDPATVKKYARRAQLGEIFEFDRATLKSDGVFRSSPRGWFTFGHANFALLFFFGHIWHGSRTLFRDVFSGIDPDLESQVEFGLFQKLGDPTTRKQAV.

A run of 6 helical transmembrane segments spans residues 21–36 (AVHL…WAGS), 101–115 (IILS…IWHW), 140–156 (GIHL…FGAF), 203–218 (IAAG…FHLS), 237–252 (VLSS…AFVV), and 457–472 (NFAL…HGSR).

Belongs to the PsbB/PsbC family. PsbB subfamily. In terms of assembly, PSII is composed of 1 copy each of membrane proteins PsbA, PsbB, PsbC, PsbD, PsbE, PsbF, PsbH, PsbI, PsbJ, PsbK, PsbL, PsbM, PsbT, PsbX, PsbY, PsbZ, Psb30/Ycf12, at least 3 peripheral proteins of the oxygen-evolving complex and a large number of cofactors. It forms dimeric complexes. The cofactor is Binds multiple chlorophylls. PSII binds additional chlorophylls, carotenoids and specific lipids..

It is found in the plastid. It localises to the chloroplast thylakoid membrane. Functionally, one of the components of the core complex of photosystem II (PSII). It binds chlorophyll and helps catalyze the primary light-induced photochemical processes of PSII. PSII is a light-driven water:plastoquinone oxidoreductase, using light energy to abstract electrons from H(2)O, generating O(2) and a proton gradient subsequently used for ATP formation. This is Photosystem II CP47 reaction center protein from Staurastrum punctulatum (Green alga).